The chain runs to 264 residues: S-adenosylmethionine decarboxylase proenzyme (264 aa).

The Schiff-base intermediate with substrate; via pyruvic acid role is filled by Ser-112. Ser-112 bears the Pyruvic acid (Ser); by autocatalysis mark. His-117 serves as the catalytic Proton acceptor; for processing activity. Catalysis depends on Cys-140, which acts as the Proton donor; for catalytic activity.

This sequence belongs to the prokaryotic AdoMetDC family. Type 2 subfamily. In terms of assembly, heterooctamer of four alpha and four beta chains arranged as a tetramer of alpha/beta heterodimers. Pyruvate is required as a cofactor. Post-translationally, is synthesized initially as an inactive proenzyme. Formation of the active enzyme involves a self-maturation process in which the active site pyruvoyl group is generated from an internal serine residue via an autocatalytic post-translational modification. Two non-identical subunits are generated from the proenzyme in this reaction, and the pyruvate is formed at the N-terminus of the alpha chain, which is derived from the carboxyl end of the proenzyme. The post-translation cleavage follows an unusual pathway, termed non-hydrolytic serinolysis, in which the side chain hydroxyl group of the serine supplies its oxygen atom to form the C-terminus of the beta chain, while the remainder of the serine residue undergoes an oxidative deamination to produce ammonia and the pyruvoyl group blocking the N-terminus of the alpha chain.

It carries out the reaction S-adenosyl-L-methionine + H(+) = S-adenosyl 3-(methylsulfanyl)propylamine + CO2. It participates in amine and polyamine biosynthesis; S-adenosylmethioninamine biosynthesis; S-adenosylmethioninamine from S-adenosyl-L-methionine: step 1/1. In terms of biological role, catalyzes the decarboxylation of S-adenosylmethionine to S-adenosylmethioninamine (dcAdoMet), the propylamine donor required for the synthesis of the polyamines spermine and spermidine from the diamine putrescine. This chain is S-adenosylmethionine decarboxylase proenzyme, found in Enterobacter sp. (strain 638).